Consider the following 640-residue polypeptide: Threonine--tRNA ligase (640 aa).

A catalytic region spans residues 224–525 (DHRKLGKELD…LTEHYAGAFP (302 aa)). Residues Cys323, His374, and His502 each contribute to the Zn(2+) site.

Belongs to the class-II aminoacyl-tRNA synthetase family. As to quaternary structure, homodimer. Requires Zn(2+) as cofactor.

The protein resides in the cytoplasm. It carries out the reaction tRNA(Thr) + L-threonine + ATP = L-threonyl-tRNA(Thr) + AMP + diphosphate + H(+). Its function is as follows. Catalyzes the attachment of threonine to tRNA(Thr) in a two-step reaction: L-threonine is first activated by ATP to form Thr-AMP and then transferred to the acceptor end of tRNA(Thr). Also edits incorrectly charged L-seryl-tRNA(Thr). The sequence is that of Threonine--tRNA ligase from Tropheryma whipplei (strain Twist) (Whipple's bacillus).